We begin with the raw amino-acid sequence, 498 residues long: Glycerol kinase (498 aa).

Residue Thr12 coordinates ADP. ATP-binding residues include Thr12, Thr13, and Ser14. Thr12 serves as a coordination point for sn-glycerol 3-phosphate. Position 16 (Arg16) interacts with ADP. Sn-glycerol 3-phosphate is bound by residues Arg82, Glu83, Tyr134, and Asp243. Glycerol contacts are provided by Arg82, Glu83, Tyr134, Asp243, and Gln244. ADP-binding residues include Thr265 and Gly308. Residues Thr265, Gly308, Gln312, and Gly409 each coordinate ATP. 2 residues coordinate ADP: Gly409 and Asn413.

Belongs to the FGGY kinase family. In terms of assembly, homotetramer and homodimer (in equilibrium).

It carries out the reaction glycerol + ATP = sn-glycerol 3-phosphate + ADP + H(+). Its pathway is polyol metabolism; glycerol degradation via glycerol kinase pathway; sn-glycerol 3-phosphate from glycerol: step 1/1. With respect to regulation, activated by phosphorylation and inhibited by fructose 1,6-bisphosphate (FBP). Key enzyme in the regulation of glycerol uptake and metabolism. Catalyzes the phosphorylation of glycerol to yield sn-glycerol 3-phosphate. This chain is Glycerol kinase, found in Clostridium botulinum (strain Okra / Type B1).